The primary structure comprises 361 residues: MRTDLFDFDLPPECIALRPAEPRDSARLLLVRPNVGVEDHSVRDLPGLLAPGDQIVVNDTKVIAAQLSGRRIGGTSEPHIDVTLIKRIDGSRWQALVRPARKLSEGDVLRFGNEGRVCLLGNLDASVEAKGEAGEVTLAFAFHGPVLDQAIADLGAPPLPPYIASRRAPDDKDVGDYQTMFAKNEGAVAAPTAGLHFTPALEAALAARGIGIQRLTLHVGAGTFLPVKADDTDDHKMHSEWGTVSEETAKTLNEARAKGGRVVAVGSTSMRLLESAATEDGIIQPFTGETAIFITPGYKFRAVDVMMTNFHLPRSTLFMLVSAFSGLDTMRAAYAHAIAKGYRFYSYGDACLLFRNAGAAS.

Belongs to the QueA family. In terms of assembly, monomer.

The protein resides in the cytoplasm. It catalyses the reaction 7-aminomethyl-7-carbaguanosine(34) in tRNA + S-adenosyl-L-methionine = epoxyqueuosine(34) in tRNA + adenine + L-methionine + 2 H(+). The protein operates within tRNA modification; tRNA-queuosine biosynthesis. Functionally, transfers and isomerizes the ribose moiety from AdoMet to the 7-aminomethyl group of 7-deazaguanine (preQ1-tRNA) to give epoxyqueuosine (oQ-tRNA). The sequence is that of S-adenosylmethionine:tRNA ribosyltransferase-isomerase from Afipia carboxidovorans (strain ATCC 49405 / DSM 1227 / KCTC 32145 / OM5) (Oligotropha carboxidovorans).